Here is a 308-residue protein sequence, read N- to C-terminus: Vomeronasal type-1 receptor 92 (308 aa).

Residues 1 to 18 lie on the Extracellular side of the membrane; sequence MNKDNTLHTIMKITMFSE. A helical transmembrane segment spans residues 19 to 39; that stretch reads VSVGISANSILFFAHLCMLLG. Residues 40 to 48 lie on the Cytoplasmic side of the membrane; it reads ENRPKPFHL. Residues 49–69 traverse the membrane as a helical segment; that stretch reads YIVSLSLTQLILLITMGLIAV. At 70-91 the chain is on the extracellular side; sequence DMFMSWGRWDSTPCQSLIYLHR. C83 and C170 form a disulfide bridge. The chain crosses the membrane as a helical span at residues 92–112; sequence LLRGFTLCAACLLNVFWMITL. The Cytoplasmic segment spans residues 113-132; the sequence is SPRSSCLSKFKHNSPHHISG. Residues 133–153 form a helical membrane-spanning segment; it reads AFLFLCVLYMSFSSHLLVSII. Over 154–188 the chain is Extracellular; the sequence is ATPNLTSNIFMYVTQSCSLLPMSYSRTSTFSTTIA. Residue N157 is glycosylated (N-linked (GlcNAc...) asparagine). The helical transmembrane segment at 189–209 threads the bilayer; it reads IREAFLISLMALSSGFMVTLL. Over 210–236 the chain is Cytoplasmic; it reads WRHKKQAQHLHSTSLSSKASPERRATR. A helical membrane pass occupies residues 237–257; sequence TILLLMSFFVVLYILENVVFY. Residues 258–267 are Extracellular-facing; sequence SRMKFKDGSM. A helical transmembrane segment spans residues 268-288; sequence FYCVQIIVSHSYATISPFVFI. At 289-308 the chain is on the cytoplasmic side; that stretch reads CTEKHMTKILRSVCTRIINI.

It belongs to the G-protein coupled receptor 1 family.

The protein resides in the cell membrane. Functionally, putative pheromone receptor implicated in the regulation of social as well as reproductive behavior. The chain is Vomeronasal type-1 receptor 92 (Vom1r92) from Rattus norvegicus (Rat).